We begin with the raw amino-acid sequence, 70 residues long: Small ribosomal subunit protein bS21 (70 aa).

Belongs to the bacterial ribosomal protein bS21 family.

The polypeptide is Small ribosomal subunit protein bS21 (Sulfurimonas denitrificans (strain ATCC 33889 / DSM 1251) (Thiomicrospira denitrificans (strain ATCC 33889 / DSM 1251))).